The chain runs to 245 residues: 1-(5-phosphoribosyl)-5-[(5-phosphoribosylamino)methylideneamino] imidazole-4-carboxamide isomerase (245 aa).

Asp8 serves as the catalytic Proton acceptor. The active-site Proton donor is Asp129.

The protein belongs to the HisA/HisF family.

It is found in the cytoplasm. It carries out the reaction 1-(5-phospho-beta-D-ribosyl)-5-[(5-phospho-beta-D-ribosylamino)methylideneamino]imidazole-4-carboxamide = 5-[(5-phospho-1-deoxy-D-ribulos-1-ylimino)methylamino]-1-(5-phospho-beta-D-ribosyl)imidazole-4-carboxamide. Its pathway is amino-acid biosynthesis; L-histidine biosynthesis; L-histidine from 5-phospho-alpha-D-ribose 1-diphosphate: step 4/9. This is 1-(5-phosphoribosyl)-5-[(5-phosphoribosylamino)methylideneamino] imidazole-4-carboxamide isomerase from Rhodopseudomonas palustris (strain BisA53).